The sequence spans 224 residues: Flagellar L-ring protein (224 aa).

The signal sequence occupies residues 1-15 (MKWYLVALSGLLLSG). C16 carries the N-palmitoyl cysteine lipid modification. A lipid anchor (S-diacylglycerol cysteine) is attached at C16.

It belongs to the FlgH family. In terms of assembly, the basal body constitutes a major portion of the flagellar organelle and consists of four rings (L,P,S, and M) mounted on a central rod.

It localises to the cell outer membrane. Its subcellular location is the bacterial flagellum basal body. In terms of biological role, assembles around the rod to form the L-ring and probably protects the motor/basal body from shearing forces during rotation. This chain is Flagellar L-ring protein, found in Trichlorobacter lovleyi (strain ATCC BAA-1151 / DSM 17278 / SZ) (Geobacter lovleyi).